The primary structure comprises 793 residues: Phosphoribosylformylglycinamidine synthase subunit PurL (793 aa).

His-53 is an active-site residue. ATP contacts are provided by Tyr-56 and Lys-95. Residue Glu-97 coordinates Mg(2+). Substrate contacts are provided by residues 98–101 (SHNH) and Arg-120. The active-site Proton acceptor is the His-99. Asp-121 contributes to the Mg(2+) binding site. Gln-244 serves as a coordination point for substrate. Asp-272 contacts Mg(2+). 316-318 (ESQ) provides a ligand contact to substrate. Positions 523 and 560 each coordinate ATP. Asn-561 is a binding site for Mg(2+). A substrate-binding site is contributed by Ser-563.

It belongs to the FGAMS family. As to quaternary structure, monomer. Part of the FGAM synthase complex composed of 1 PurL, 1 PurQ and 2 PurS subunits.

It localises to the cytoplasm. It catalyses the reaction N(2)-formyl-N(1)-(5-phospho-beta-D-ribosyl)glycinamide + L-glutamine + ATP + H2O = 2-formamido-N(1)-(5-O-phospho-beta-D-ribosyl)acetamidine + L-glutamate + ADP + phosphate + H(+). The protein operates within purine metabolism; IMP biosynthesis via de novo pathway; 5-amino-1-(5-phospho-D-ribosyl)imidazole from N(2)-formyl-N(1)-(5-phospho-D-ribosyl)glycinamide: step 1/2. Part of the phosphoribosylformylglycinamidine synthase complex involved in the purines biosynthetic pathway. Catalyzes the ATP-dependent conversion of formylglycinamide ribonucleotide (FGAR) and glutamine to yield formylglycinamidine ribonucleotide (FGAM) and glutamate. The FGAM synthase complex is composed of three subunits. PurQ produces an ammonia molecule by converting glutamine to glutamate. PurL transfers the ammonia molecule to FGAR to form FGAM in an ATP-dependent manner. PurS interacts with PurQ and PurL and is thought to assist in the transfer of the ammonia molecule from PurQ to PurL. The protein is Phosphoribosylformylglycinamidine synthase subunit PurL of Prochlorococcus marinus (strain SARG / CCMP1375 / SS120).